The chain runs to 97 residues: Acylphosphatase-2 (97 aa).

Ala-2 carries the N-acetylalanine modification. One can recognise an Acylphosphatase-like domain in the interval 7-97; the sequence is SVDYEVFGTV…LEYSNFSIRY (91 aa). Residues Arg-22 and Asn-40 contribute to the active site. Ser-91 bears the Phosphoserine mark.

This sequence belongs to the acylphosphatase family.

It catalyses the reaction an acyl phosphate + H2O = a carboxylate + phosphate + H(+). Its function is as follows. Its physiological role is not yet clear. This Rattus norvegicus (Rat) protein is Acylphosphatase-2 (Acyp2).